The primary structure comprises 278 residues: Shikimate dehydrogenase (NADP(+)) (278 aa).

Shikimate is bound by residues 19-21 (SRS) and threonine 66. The Proton acceptor role is filled by lysine 70. Asparagine 91 and aspartate 106 together coordinate shikimate. NADP(+) contacts are provided by residues 129–133 (GAGGA) and phenylalanine 221. Tyrosine 223 serves as a coordination point for shikimate. An NADP(+)-binding site is contributed by glycine 242.

This sequence belongs to the shikimate dehydrogenase family. Homodimer.

It catalyses the reaction shikimate + NADP(+) = 3-dehydroshikimate + NADPH + H(+). Its pathway is metabolic intermediate biosynthesis; chorismate biosynthesis; chorismate from D-erythrose 4-phosphate and phosphoenolpyruvate: step 4/7. Its function is as follows. Involved in the biosynthesis of the chorismate, which leads to the biosynthesis of aromatic amino acids. Catalyzes the reversible NADPH linked reduction of 3-dehydroshikimate (DHSA) to yield shikimate (SA). The sequence is that of Shikimate dehydrogenase (NADP(+)) from Anaeromyxobacter dehalogenans (strain 2CP-1 / ATCC BAA-258).